The chain runs to 200 residues: Gamma-glutamyl-CDP-amidate hydrolase (200 aa).

The Glutamine amidotransferase type-1 domain maps to 20 to 200; the sequence is ECLALDWGKL…LKEWFSLIKE (181 aa). The active-site Nucleophile is Cys-101. Catalysis depends on residues His-178 and Glu-180.

It catalyses the reaction N(5)-(cytidine 5'-diphosphoramidyl)-L-glutamine + H2O = cytidine 5'-diphosphoramidate + L-glutamate + H(+). It participates in capsule biogenesis; capsule polysaccharide biosynthesis. In terms of biological role, involved in the biosynthesis of the O-methyl phosphoramidate (MeOPN) group found on the capsular polysaccharide (CPS) of C.jejuni. Catalyzes the hydrolysis of CDP-L-glutamine to L-glutamate and cytidine diphosphoramidate. The sequence is that of Gamma-glutamyl-CDP-amidate hydrolase from Campylobacter jejuni subsp. jejuni serotype O:2 (strain ATCC 700819 / NCTC 11168).